Reading from the N-terminus, the 396-residue chain is Succinyl-CoA:mesaconate CoA-transferase (396 aa).

Aspartate 175 functions as the Nucleophile in the catalytic mechanism.

This sequence belongs to the CoA-transferase III family. In terms of assembly, homodimer.

It catalyses the reaction mesaconate + succinyl-CoA = 2-methylfumaryl-CoA + succinate. Its activity is regulated as follows. Shows highest activity at 4 M KCl. Does not require divalent ions for activity. Its function is as follows. Involved in the methylaspartate cycle. Catalyzes the transfer of the CoA moiety from succinyl-CoA to mesaconate to generate mesaconyl-CoA (2-methylfumaryl-CoA) and succinate. Also shows high activity with methylsuccinate as CoA-acceptor, and only low activity with glutarate, acrylate and itaconate. Cannot use other CoA donors like acetyl-CoA, propionyl-CoA, butyryl-CoA or acetoacetyl-CoA. In Haloarcula hispanica (strain ATCC 33960 / DSM 4426 / JCM 8911 / NBRC 102182 / NCIMB 2187 / VKM B-1755), this protein is Succinyl-CoA:mesaconate CoA-transferase.